Reading from the N-terminus, the 89-residue chain is Small ribosomal subunit protein uS15 (89 aa).

It belongs to the universal ribosomal protein uS15 family. Part of the 30S ribosomal subunit. Forms a bridge to the 50S subunit in the 70S ribosome, contacting the 23S rRNA.

In terms of biological role, one of the primary rRNA binding proteins, it binds directly to 16S rRNA where it helps nucleate assembly of the platform of the 30S subunit by binding and bridging several RNA helices of the 16S rRNA. Its function is as follows. Forms an intersubunit bridge (bridge B4) with the 23S rRNA of the 50S subunit in the ribosome. The protein is Small ribosomal subunit protein uS15 of Chlamydia abortus (strain DSM 27085 / S26/3) (Chlamydophila abortus).